The primary structure comprises 325 residues: VSG expression site-associated protein 117A (325 aa).

Positions 1 to 23 (MKVTIVELVVWLFSVNFFVVVAE) are cleaved as a signal peptide. N-linked (GlcNAc...) asparagine glycans are attached at residues Asn-72, Asn-290, and Asn-313.

In terms of biological role, not known but may be related to activation of the variant surface glycoprotein genes. This Trypanosoma brucei brucei protein is VSG expression site-associated protein 117A.